The chain runs to 474 residues: RNA-binding protein Nova-1 (474 aa).

Residues 1-12 (MAAAPIQQNGTH) are compositionally biased toward polar residues. The disordered stretch occupies residues 1–43 (MAAAPIQQNGTHTGVPIDLDPPDSRKRPLEAPPEAGSTKRTNT). Residues 26–42 (KRPLEAPPEAGSTKRTN) carry the Bipartite nuclear localization signal motif. 3 KH domains span residues 48 to 115 (QYFL…HGFI), 146 to 212 (IKQV…VELI), and 396 to 463 (KDVV…QYLI). The interval 394–474 (GSKDVVEIAV…QRITYEQGVR (81 aa)) is required for RNA binding.

In terms of assembly, interacts with PTBP2; the interaction is direct.

The protein localises to the nucleus. Functionally, functions to regulate alternative splicing in neurons by binding pre-mRNA in a sequence-specific manner to activate exon inclusion or exclusion. It binds specifically to the sequences 5'-YCAY-3' and regulates splicing in only a subset of regulated exons. Binding to an exonic 5'-YCAY-3' cluster changes the protein complexes assembled on pre-mRNA, blocking U1 snRNP binding and exon inclusion, whereas binding to an intronic 5'-YCAY-3' cluster enhances spliceosome assembly and exon inclusion. Binding to 5'-YCAY-3' clusters results in a local and asymmetric action to regulate spliceosome assembly and alternative splicing in neurons. Binding to an exonic 5'-YCAY-3' cluster changed the protein complexes assembled on pre-mRNA, blocking U1 snRNP (small nuclear ribonucleoprotein) binding and exon inclusion, whereas binding to an intronic 5'-YCAY-3' cluster enhanced spliceosome assembly and exon inclusion. With NOVA1, they perform unique biological functions in different brain areas and cell types. Autoregulates its own expression by acting as a splicing repressor. Acts to activate the inclusion of exon E3A in the glycine receptor alpha-2 chain and of exon E9 in gamma-aminobutyric-acid receptor gamma-2 subunit via a distal downstream UCAU-rich intronic splicing enhancer. Acts to regulate a novel glycine receptor alpha-2 chain splice variant (alpha-2N) in developing spinal cord. The chain is RNA-binding protein Nova-1 from Rattus norvegicus (Rat).